A 664-amino-acid polypeptide reads, in one-letter code: Glycine--tRNA ligase beta subunit (664 aa).

This sequence belongs to the class-II aminoacyl-tRNA synthetase family. In terms of assembly, tetramer of two alpha and two beta subunits.

Its subcellular location is the cytoplasm. It catalyses the reaction tRNA(Gly) + glycine + ATP = glycyl-tRNA(Gly) + AMP + diphosphate. The protein is Glycine--tRNA ligase beta subunit (glyS) of Aquifex aeolicus (strain VF5).